Here is a 230-residue protein sequence, read N- to C-terminus: Ribose-5-phosphate isomerase A (230 aa).

Substrate-binding positions include 29–32 (TGST), 85–88 (DGAD), and 98–101 (KGGG). E107 (proton acceptor) is an active-site residue. Position 125 (K125) interacts with substrate.

It belongs to the ribose 5-phosphate isomerase family. Homodimer.

The enzyme catalyses aldehydo-D-ribose 5-phosphate = D-ribulose 5-phosphate. It functions in the pathway carbohydrate degradation; pentose phosphate pathway; D-ribose 5-phosphate from D-ribulose 5-phosphate (non-oxidative stage): step 1/1. In terms of biological role, catalyzes the reversible conversion of ribose-5-phosphate to ribulose 5-phosphate. In Staphylococcus epidermidis (strain ATCC 35984 / DSM 28319 / BCRC 17069 / CCUG 31568 / BM 3577 / RP62A), this protein is Ribose-5-phosphate isomerase A.